Consider the following 572-residue polypeptide: E3 ubiquitin-protein ligase ZFP91 (572 aa).

A compositionally biased stretch (basic and acidic residues) spans 1 to 12; the sequence is MPGETEEPRSPE. The segment at 1–308 is disordered; sequence MPGETEEPRS…PRLPKRRKKP (308 aa). Residues 61 to 70 are compositionally biased toward low complexity; the sequence is AAAAAAAAAA. Residues 72-85 are compositionally biased toward basic residues; sequence SRRRKAEYPRRRRS. Ser-86 and Ser-106 each carry phosphoserine. Positions 122 to 131 are enriched in basic and acidic residues; sequence LTTDKDPKEE. Residues 143-162 are compositionally biased toward low complexity; it reads SITTTRASRSWRSSSRTSIS. Positions 209-225 are enriched in acidic residues; the sequence is SDEEEEEEEEMLISEEE. Composition is skewed to basic and acidic residues over residues 226 to 247 and 254 to 271; these read IPFKDDPRDETYKPHLERETPK and KVKEEKEKKEIKVEVEVE. Over residues 272 to 284 the composition is skewed to acidic residues; sequence VKEEENEIREDEE. 5 C2H2-type zinc fingers span residues 313–338, 344–368, 374–396, 402–424, and 432–455; these read VRCEMEGCGTVLAHPRYLQHHIKYQH, YVCPHPSCGRLFRLQKQLLRHAKHH, YICEYCARAFKSSHNLAVHRMIH, LQCEICGFTCRQKASLNWHMKKH, and FSCNICGKKFEKKDSVVAHKAKSH. The tract at residues 340-370 is interaction with MAP3K14/NIK; the sequence is LKKKYVCPHPSCGRLFRLQKQLLRHAKHHTD.

This sequence belongs to the krueppel C2H2-type zinc-finger protein family. In terms of assembly, interacts with MAP3K14/NIK. In terms of tissue distribution, found in all the examined tissues including brain, heart, kidney, lung, liver, spleen, thymus, skeletal muscle, ovary and testis.

It localises to the nucleus. The catalysed reaction is S-ubiquitinyl-[E2 ubiquitin-conjugating enzyme]-L-cysteine + [acceptor protein]-L-lysine = [E2 ubiquitin-conjugating enzyme]-L-cysteine + N(6)-ubiquitinyl-[acceptor protein]-L-lysine.. It participates in protein modification; protein ubiquitination. Atypical E3 ubiquitin-protein ligase that mediates 'Lys-63'-linked ubiquitination of MAP3K14/NIK, leading to stabilize and activate MAP3K14/NIK. It thereby acts as an activator of the non-canonical NF-kappa-B2/NFKB2 pathway. May also play an important role in cell proliferation and/or anti-apoptosis. In Mus musculus (Mouse), this protein is E3 ubiquitin-protein ligase ZFP91 (Zfp91).